A 230-amino-acid polypeptide reads, in one-letter code: Probable carboxylesterase Culp2 (230 aa).

Residues 1-32 constitute a signal peptide (tat-type signal); it reads MNDLLTRRLLTMGAAAAMLAAVLLLTPITVPA. C45 and C112 are joined by a disulfide. S123 acts as the Nucleophile in catalysis. The cysteines at positions 185 and 192 are disulfide-linked. D189 is a catalytic residue. H207 functions as the Proton donor/acceptor in the catalytic mechanism.

The protein belongs to the cutinase family. In terms of processing, predicted to be exported by the Tat system. The position of the signal peptide cleavage has not been experimentally proven.

It is found in the secreted. Its subcellular location is the cell surface. This chain is Probable carboxylesterase Culp2 (cut2), found in Mycobacterium bovis (strain ATCC BAA-935 / AF2122/97).